We begin with the raw amino-acid sequence, 113 residues long: uncharacterized protein (113 aa).

Residues 1 to 14 constitute a mitochondrion transit peptide; it reads MATRNALRIVSRRF. The interval 41 to 79 is disordered; the sequence is QKLARQGPGEQAAGSASEAKVAGATASASAESGPKVSED. The span at 55 to 73 shows a compositional bias: low complexity; it reads SASEAKVAGATASASAESG.

Its subcellular location is the mitochondrion. This is an uncharacterized protein from Arabidopsis thaliana (Mouse-ear cress).